The following is a 283-amino-acid chain: Putative S-adenosyl-L-methionine-dependent methyltransferase SCO7813 (283 aa).

Residues D121 and 150 to 151 (DL) contribute to the S-adenosyl-L-methionine site. The tract at residues 264-283 (MSTLPQHEDGPGGLISAVRR) is disordered.

This sequence belongs to the UPF0677 family.

Functionally, exhibits S-adenosyl-L-methionine-dependent methyltransferase activity. This Streptomyces coelicolor (strain ATCC BAA-471 / A3(2) / M145) protein is Putative S-adenosyl-L-methionine-dependent methyltransferase SCO7813.